Consider the following 1057-residue polypeptide: Probable E3 ubiquitin-protein ligase HERC4 (1057 aa).

RCC1 repeat units follow at residues 1–51 (MLCW…FVLD), 52–101 (DGTV…ALND), 102–154 (KGQV…ALSK), 156–207 (SEVF…VLTL), 208–259 (SGAI…ALTK), 261–311 (GGVF…AFVP), and 313–368 (SGRI…KRIF). The HECT domain occupies 730–1057 (KNIDYKKPLK…IDHNEGFSLI (328 aa)). Residue cysteine 1025 is the Glycyl thioester intermediate of the active site.

In terms of tissue distribution, expressed in brain and testis and detected in heart and placenta.

It localises to the cytoplasm. It is found in the cytosol. The catalysed reaction is S-ubiquitinyl-[E2 ubiquitin-conjugating enzyme]-L-cysteine + [acceptor protein]-L-lysine = [E2 ubiquitin-conjugating enzyme]-L-cysteine + N(6)-ubiquitinyl-[acceptor protein]-L-lysine.. It functions in the pathway protein modification; protein ubiquitination. Functionally, probable E3 ubiquitin-protein ligase involved in either protein trafficking or in the distribution of cellular structures. Required for spermatozoon maturation and fertility, and for the removal of the cytoplasmic droplet of the spermatozoon. E3 ubiquitin-protein ligases accept ubiquitin from an E2 ubiquitin-conjugating enzyme in the form of a thioester and then directly transfer it to targeted substrates. The chain is Probable E3 ubiquitin-protein ligase HERC4 (HERC4) from Homo sapiens (Human).